Reading from the N-terminus, the 571-residue chain is Penton protein (571 aa).

Positions 297–325 (KDDTEQGGGGAGGSNSSGSGAEENSNAAA) are disordered. The segment covering 302 to 311 (QGGGGAGGSN) has biased composition (gly residues). Over residues 312–325 (SSGSGAEENSNAAA) the composition is skewed to low complexity. A Cell attachment site motif is present at residues 340–342 (RGD). The tract at residues 347-383 (RAEEKRAEAEAAAEAAAPAAQPEVEKPQKKPVIKPLT) is disordered. Over residues 356-368 (EAAAEAAAPAAQP) the composition is skewed to low complexity.

It belongs to the adenoviridae penton family. In terms of assembly, interacts (via the cell attachment site RGD) with host heterodimer ITGAV-ITGB5; this interaction promotes virus internalization. Interacts with host WWP1 and WWP2. Interacts with the fiber protein (via N-terminal tail region). Interacts with the capsid vertex protein; this interaction binds the penton base to neighboring peripentonal hexons.

It is found in the virion. The protein resides in the host nucleus. Functionally, major capsid protein that self-associates to form penton base pentamers, each in the shape of a pentagon, situated at the 12 vertices of the pseudo T=25 capsid. Involved in virus secondary attachment to host cell after initial attachment by the fiber protein. Binds host integrin heterodimer ITGAV-ITGB5 (alphaV-beta5) thereby triggering clathrin-mediated endocytosis of virions. Mediates initial virus attachment to CXADR-negative cells. Binding to integrins ITGAV-ITGB5 also seems to induce macropinocytosis uptake of the virus. As the virus enters the host cell, penton proteins are shed concomitant with virion acidification in the endosome. The protein is Penton protein of Homo sapiens (Human).